Reading from the N-terminus, the 225-residue chain is Octanoyltransferase (225 aa).

One can recognise a BPL/LPL catalytic domain in the interval R44–I219. Substrate is bound by residues R83–H90, S150–G152, and G163–A165. The active-site Acyl-thioester intermediate is the C181.

This sequence belongs to the LipB family.

It is found in the cytoplasm. The catalysed reaction is octanoyl-[ACP] + L-lysyl-[protein] = N(6)-octanoyl-L-lysyl-[protein] + holo-[ACP] + H(+). It functions in the pathway protein modification; protein lipoylation via endogenous pathway; protein N(6)-(lipoyl)lysine from octanoyl-[acyl-carrier-protein]: step 1/2. Its function is as follows. Catalyzes the transfer of endogenously produced octanoic acid from octanoyl-acyl-carrier-protein onto the lipoyl domains of lipoate-dependent enzymes. Lipoyl-ACP can also act as a substrate although octanoyl-ACP is likely to be the physiological substrate. The sequence is that of Octanoyltransferase from Nitrosomonas eutropha (strain DSM 101675 / C91 / Nm57).